Reading from the N-terminus, the 25-residue chain is Xenoposin precursor fragment R2 (25 aa).

Expressed by the skin glands.

Its subcellular location is the secreted. Functionally, antimicrobial peptide. The polypeptide is Xenoposin precursor fragment R2 (Xenopus ruwenzoriensis (Uganda clawed frog)).